A 317-amino-acid chain; its full sequence is Acetyl-coenzyme A carboxylase carboxyl transferase subunit alpha (317 aa).

The region spanning 40–293 (LEKRSADALK…GDIITASLRS (254 aa)) is the CoA carboxyltransferase C-terminal domain.

This sequence belongs to the AccA family. As to quaternary structure, acetyl-CoA carboxylase is a heterohexamer composed of biotin carboxyl carrier protein (AccB), biotin carboxylase (AccC) and two subunits each of ACCase subunit alpha (AccA) and ACCase subunit beta (AccD).

The protein localises to the cytoplasm. The enzyme catalyses N(6)-carboxybiotinyl-L-lysyl-[protein] + acetyl-CoA = N(6)-biotinyl-L-lysyl-[protein] + malonyl-CoA. Its pathway is lipid metabolism; malonyl-CoA biosynthesis; malonyl-CoA from acetyl-CoA: step 1/1. In terms of biological role, component of the acetyl coenzyme A carboxylase (ACC) complex. First, biotin carboxylase catalyzes the carboxylation of biotin on its carrier protein (BCCP) and then the CO(2) group is transferred by the carboxyltransferase to acetyl-CoA to form malonyl-CoA. The polypeptide is Acetyl-coenzyme A carboxylase carboxyl transferase subunit alpha (Brucella anthropi (strain ATCC 49188 / DSM 6882 / CCUG 24695 / JCM 21032 / LMG 3331 / NBRC 15819 / NCTC 12168 / Alc 37) (Ochrobactrum anthropi)).